Reading from the N-terminus, the 109-residue chain is Probable gas vesicle protein J1 (109 aa).

Belongs to the gas vesicle GvpA family. In terms of assembly, interacts with GvpA.

It is found in the gas vesicle. Functionally, a minor component of the gas vesicle, might be involved in nucleating gas vesicle formation. Gas vesicles (GV) are hollow, gas filled proteinaceous nanostructures. It is not clear what function GVs perform in soil bacteria. The sequence is that of Probable gas vesicle protein J1 (gvpJ1) from Streptomyces coelicolor (strain ATCC BAA-471 / A3(2) / M145).